Here is a 122-residue protein sequence, read N- to C-terminus: Large ribosomal subunit protein uL14 (122 aa).

Belongs to the universal ribosomal protein uL14 family. In terms of assembly, part of the 50S ribosomal subunit. Forms a cluster with proteins L3 and L19. In the 70S ribosome, L14 and L19 interact and together make contacts with the 16S rRNA in bridges B5 and B8.

Its function is as follows. Binds to 23S rRNA. Forms part of two intersubunit bridges in the 70S ribosome. The protein is Large ribosomal subunit protein uL14 of Jannaschia sp. (strain CCS1).